A 488-amino-acid polypeptide reads, in one-letter code: DNA polymerase II small subunit (488 aa).

This sequence belongs to the DNA polymerase delta/II small subunit family. As to quaternary structure, heterodimer of a large subunit and a small subunit.

It catalyses the reaction DNA(n) + a 2'-deoxyribonucleoside 5'-triphosphate = DNA(n+1) + diphosphate. The enzyme catalyses Exonucleolytic cleavage in the 3'- to 5'-direction to yield nucleoside 5'-phosphates.. In terms of biological role, possesses two activities: a DNA synthesis (polymerase) and an exonucleolytic activity that degrades single-stranded DNA in the 3' to 5' direction. Has a template-primer preference which is characteristic of a replicative DNA polymerase. The polypeptide is DNA polymerase II small subunit (polB) (Thermoplasma acidophilum (strain ATCC 25905 / DSM 1728 / JCM 9062 / NBRC 15155 / AMRC-C165)).